A 572-amino-acid chain; its full sequence is Glutamate--tRNA ligase (572 aa).

A 'HIGH' region motif is present at residues 107–117; sequence PNPDGAFHLGN.

This sequence belongs to the class-I aminoacyl-tRNA synthetase family. Glutamate--tRNA ligase type 2 subfamily.

The protein localises to the cytoplasm. It carries out the reaction tRNA(Glu) + L-glutamate + ATP = L-glutamyl-tRNA(Glu) + AMP + diphosphate. Its function is as follows. Catalyzes the attachment of glutamate to tRNA(Glu) in a two-step reaction: glutamate is first activated by ATP to form Glu-AMP and then transferred to the acceptor end of tRNA(Glu). The sequence is that of Glutamate--tRNA ligase from Pyrococcus furiosus (strain ATCC 43587 / DSM 3638 / JCM 8422 / Vc1).